Consider the following 181-residue polypeptide: Adenylate kinase (181 aa).

10–15 contributes to the ATP binding site; it reads GAGKGT. The interval 30–59 is NMP; that stretch reads STGDLFRKNIGDGTPLGLEAKRYLDAGDLV. Residues T31, R36, 57-59, 85-88, and Q92 contribute to the AMP site; these read DLV and GYPR. The segment at 126 to 132 is LID; it reads GRGRADD. Residue R127 coordinates ATP. AMP is bound by residues R129 and R140. G166 is a binding site for ATP.

It belongs to the adenylate kinase family. Monomer.

The protein resides in the cytoplasm. The enzyme catalyses AMP + ATP = 2 ADP. Its pathway is purine metabolism; AMP biosynthesis via salvage pathway; AMP from ADP: step 1/1. In terms of biological role, catalyzes the reversible transfer of the terminal phosphate group between ATP and AMP. Plays an important role in cellular energy homeostasis and in adenine nucleotide metabolism. This is Adenylate kinase from Mycolicibacterium smegmatis (strain ATCC 700084 / mc(2)155) (Mycobacterium smegmatis).